A 507-amino-acid chain; its full sequence is RNA demethylase ALKBH9B (507 aa).

Disordered stretches follow at residues 76–102 (GSERASNNVDDNYDEKSENGEDCDNHS) and 145–183 (QEDEFDEEEEEEEEERDSSRKGFDASSMKTPEKPKLSRD). Residues 89–100 (DEKSENGEDCDN) are compositionally biased toward basic and acidic residues. Positions 145 to 160 (QEDEFDEEEEEEEEER) are enriched in acidic residues. Over residues 174–183 (TPEKPKLSRD) the composition is skewed to basic and acidic residues. In terms of domain architecture, Fe2OG dioxygenase spans 317-414 (VPDSCIVNIY…RISITFRKMD (98 aa)). Fe cation-binding residues include His335, Asp337, and His396. 2-oxoglutarate is bound at residue Arg405. Residues 432–507 (EPLPLDLNRS…MPRPSRRNYG (76 aa)) form a disordered region. Over residues 440-450 (RSGSTSRFSRL) the composition is skewed to polar residues. Over residues 497–507 (GMPRPSRRNYG) the composition is skewed to basic residues.

It belongs to the alkB family. (Microbial infection) Interacts with the capsid protein ORF3b of the alfalfa mosaic virus (AMV). Fe(2+) is required as a cofactor.

The protein resides in the cytoplasm. It is found in the P-body. Its subcellular location is the cytoplasmic granule. The catalysed reaction is an N(6)-methyladenosine in mRNA + 2-oxoglutarate + O2 = an adenosine in mRNA + formaldehyde + succinate + CO2. Its function is as follows. Dioxygenase that demethylates RNA by oxidative demethylation: specifically demethylates N(6)-methyladenosine (m6A) RNA, the most prevalent internal modification of messenger RNA (mRNA) in higher eukaryotes. Modulates viral infection of the alfalfa mosaic virus (AMV) and the m6A abundance in its genomic RNAs. In Arabidopsis thaliana (Mouse-ear cress), this protein is RNA demethylase ALKBH9B.